The following is a 232-amino-acid chain: tRNA (guanine-N(1)-)-methyltransferase (232 aa).

S-adenosyl-L-methionine contacts are provided by residues glycine 111 and 131 to 136 (IGDYIL).

The protein belongs to the RNA methyltransferase TrmD family. In terms of assembly, homodimer.

It is found in the cytoplasm. The enzyme catalyses guanosine(37) in tRNA + S-adenosyl-L-methionine = N(1)-methylguanosine(37) in tRNA + S-adenosyl-L-homocysteine + H(+). In terms of biological role, specifically methylates guanosine-37 in various tRNAs. In Bartonella tribocorum (strain CIP 105476 / IBS 506), this protein is tRNA (guanine-N(1)-)-methyltransferase.